Consider the following 556-residue polypeptide: Undecaprenyl phosphate-alpha-4-amino-4-deoxy-L-arabinose arabinosyl transferase (556 aa).

10 helical membrane-spanning segments follow: residues 88–108 (FASV…AMML), 116–136 (LLAA…TYSV), 179–199 (FMTK…PVAL), 207–227 (LLLF…PWAL), 258–278 (APFW…LALL), 296–316 (FFLL…KGKL), 319–339 (YILP…SGLA), 355–375 (IVFG…IIVP), 384–404 (LTII…AVSL), and 410–430 (WGYL…GSIP).

Belongs to the glycosyltransferase 83 family.

It is found in the cell inner membrane. The catalysed reaction is 4-amino-4-deoxy-alpha-L-arabinopyranosyl di-trans,octa-cis-undecaprenyl phosphate + lipid IVA = lipid IIA + di-trans,octa-cis-undecaprenyl phosphate.. The protein operates within lipopolysaccharide metabolism; 4-amino-4-deoxy-beta-L-arabinose-lipid A biosynthesis. Functionally, catalyzes the transfer of the L-Ara4N moiety of the glycolipid undecaprenyl phosphate-alpha-L-Ara4N to lipid A. The modified arabinose is attached to lipid A and is required for resistance to polymyxin and cationic antimicrobial peptides. In Pectobacterium atrosepticum (strain SCRI 1043 / ATCC BAA-672) (Erwinia carotovora subsp. atroseptica), this protein is Undecaprenyl phosphate-alpha-4-amino-4-deoxy-L-arabinose arabinosyl transferase.